Consider the following 435-residue polypeptide: E3 ubiquitin-protein ligase itt1 (435 aa).

Positions 16 to 135 (DELIALQSIY…EHVRSIATIA (120 aa)) constitute an RWD domain. The tract at residues 170-420 (RKFQCNVCFD…DPVSSCYGML (251 aa)) is TRIAD supradomain. Residues C174, C177, C192, H194, C197, C200, C219, C224, C266, C271, C286, C289, C294, C297, H302, C308, C368, and C371 each contribute to the Zn(2+) site. Residues 174–224 (CNVCFDEFNGTDCFQLTRCGHVSCQSCLRDYYTMCIQEGMFSQIKCIDLDC) form an RING-type 1 zinc finger. Residues 245–308 (TNRYKELEEK…ATWHGDLSPC (64 aa)) form an IBR-type zinc finger. Residues 368–396 (CPTCDRVVERIDGCCHMNCLCGTHFCFLC) form an RING-type 2; atypical zinc finger. The active site involves C381. C386, C388, C393, C396, H408, and C416 together coordinate Zn(2+).

It belongs to the RBR family. RNF14 subfamily.

The protein resides in the cytoplasm. Its subcellular location is the nucleus. The enzyme catalyses [E2 ubiquitin-conjugating enzyme]-S-ubiquitinyl-L-cysteine + [acceptor protein]-L-lysine = [E2 ubiquitin-conjugating enzyme]-L-cysteine + [acceptor protein]-N(6)-ubiquitinyl-L-lysine.. It functions in the pathway protein modification; protein ubiquitination. Functionally, E3 ubiquitin-protein ligase involved in the rescue of stalled ribosomes by promoting ubiquitination and degradation of proteins on stalled ribosomes. Specifically required to resolve RNA-protein cross-links caused by reactive aldehydes, which trigger translation stress by stalling ribosomes: acts by catalying 'Lys-6'-linked ubiquitination of RNA-protein cross-links, leading to their degradation. The polypeptide is E3 ubiquitin-protein ligase itt1 (itt1) (Schizosaccharomyces pombe (strain 972 / ATCC 24843) (Fission yeast)).